The primary structure comprises 264 residues: MAVLSMKQLLEAGVHFGHQTRRWNPKMKKFIFTERNGIYIIDLQKTVRMVDDAYDFVKEEAANEGVFLFVGTKKQAQDAIAEESVRAGQYFVNHRWLGGTLTNWDTIQKRIKRLKEIKAMDEDGTFERLPKKEVALLKKQQEKLEKFLGGIEDMPRIPDVMFVVDPRKERIAIKEAQKLNIPVVAMVDTNSDPDDIDVIIPSNDDAIRAVRLITAKMADAIIEGRQGEDDVEEATFAAENKSADSMEEIVEAVEGNNDTNTDAK.

Belongs to the universal ribosomal protein uS2 family.

This Latilactobacillus sakei subsp. sakei (strain 23K) (Lactobacillus sakei subsp. sakei) protein is Small ribosomal subunit protein uS2.